The following is a 246-amino-acid chain: tRNA pseudouridine synthase A (246 aa).

Aspartate 54 functions as the Nucleophile in the catalytic mechanism. Position 112 (tyrosine 112) interacts with substrate.

Belongs to the tRNA pseudouridine synthase TruA family. In terms of assembly, homodimer.

It carries out the reaction uridine(38/39/40) in tRNA = pseudouridine(38/39/40) in tRNA. Its function is as follows. Formation of pseudouridine at positions 38, 39 and 40 in the anticodon stem and loop of transfer RNAs. The sequence is that of tRNA pseudouridine synthase A from Moorella thermoacetica (strain ATCC 39073 / JCM 9320).